A 591-amino-acid chain; its full sequence is Oligopeptide-binding protein OppA (591 aa).

It belongs to the bacterial solute-binding protein 5 family. In terms of assembly, the complex is composed of an ATP-binding protein (OppD), two transmembrane proteins (OppB and OppC) and a solute-binding protein (OppA).

The protein resides in the periplasm. Part of the ABC transporter complex OppABCD involved in the uptake of oligopeptides. Peptide-binding protein that shows broad specificity but a moderate preference for hydrophobic oligopeptides and those that are 6-16 amino acids long. This is Oligopeptide-binding protein OppA from Mycobacterium bovis (strain ATCC BAA-935 / AF2122/97).